A 272-amino-acid polypeptide reads, in one-letter code: FAS1 domain-containing protein YDR262W (272 aa).

An N-terminal signal peptide occupies residues 1-26 (MIFNLPVSVLLYFSLIWAMEPSFVRG). The FAS1 domain occupies 100-269 (PLSLESKLSL…GVILMVDFTL (170 aa)).

Its subcellular location is the vacuole. This chain is FAS1 domain-containing protein YDR262W, found in Saccharomyces cerevisiae (strain ATCC 204508 / S288c) (Baker's yeast).